The chain runs to 192 residues: MIEPSIIPVLVENTEEKTFKFQPGQVSQWLTGQGLQHQILEPDLLGVELIGVEPSELQKIAEALKSNGFDYLQCQGGYDEGPGGRLVSFYHLIKLGTIADHYLTPNTLPPNSILKEVRLKVFLLRDGNLSVPSLYSIFRGSDWQERETFDMFGISYEGHPHPKRLLMPEDWKGYPLRKDYIQPDFYEMQVAY.

Belongs to the complex I 30 kDa subunit family. As to quaternary structure, NDH is composed of at least 16 different subunits, 5 of which are encoded in the nucleus.

It localises to the plastid. Its subcellular location is the organellar chromatophore thylakoid membrane. The enzyme catalyses a quinone + NADH + H(+) = a quinol + NAD(+). Its function is as follows. NDH-1 shuttles electrons from NADH, via FMN and iron-sulfur (Fe-S) centers, to quinones in the respiratory chain. Couples the redox reaction to proton translocation (for every two electrons transferred, four hydrogen ions are translocated across the cytoplasmic membrane), and thus conserves the redox energy in a proton gradient. The polypeptide is NAD(P)H-quinone oxidoreductase subunit J, organellar chromatophore (Paulinella chromatophora).